The following is a 316-amino-acid chain: Methionyl-tRNA formyltransferase (316 aa).

110–113 (SLLP) provides a ligand contact to (6S)-5,6,7,8-tetrahydrofolate.

The protein belongs to the Fmt family.

The catalysed reaction is L-methionyl-tRNA(fMet) + (6R)-10-formyltetrahydrofolate = N-formyl-L-methionyl-tRNA(fMet) + (6S)-5,6,7,8-tetrahydrofolate + H(+). Functionally, attaches a formyl group to the free amino group of methionyl-tRNA(fMet). The formyl group appears to play a dual role in the initiator identity of N-formylmethionyl-tRNA by promoting its recognition by IF2 and preventing the misappropriation of this tRNA by the elongation apparatus. This chain is Methionyl-tRNA formyltransferase, found in Bacillus licheniformis (strain ATCC 14580 / DSM 13 / JCM 2505 / CCUG 7422 / NBRC 12200 / NCIMB 9375 / NCTC 10341 / NRRL NRS-1264 / Gibson 46).